The chain runs to 149 residues: Macrodomain Ter protein (149 aa).

It belongs to the MatP family. As to quaternary structure, homodimer.

The protein resides in the cytoplasm. Functionally, required for spatial organization of the terminus region of the chromosome (Ter macrodomain) during the cell cycle. Prevents early segregation of duplicated Ter macrodomains during cell division. Binds specifically to matS, which is a 13 bp signature motif repeated within the Ter macrodomain. This is Macrodomain Ter protein from Vibrio parahaemolyticus serotype O3:K6 (strain RIMD 2210633).